Consider the following 485-residue polypeptide: Zinc finger SWIM domain-containing protein 1 (485 aa).

The SWIM-type zinc finger occupies 363-405 (MNIQILEDTHKVQPQPPASCSCYFNQAFHLPCRHILAMLSARR).

The polypeptide is Zinc finger SWIM domain-containing protein 1 (ZSWIM1) (Homo sapiens (Human)).